The primary structure comprises 208 residues: High frequency lysogenization protein HflD homolog (208 aa).

It belongs to the HflD family.

It localises to the cytoplasm. The protein localises to the cell inner membrane. The polypeptide is High frequency lysogenization protein HflD homolog (Yersinia enterocolitica serotype O:8 / biotype 1B (strain NCTC 13174 / 8081)).